Reading from the N-terminus, the 463-residue chain is Female germline-specific tumor suppressor gld-1 (463 aa).

Positions 1-10 are enriched in polar residues; that stretch reads MPSCTTPTYG. A disordered region spans residues 1-76; it reads MPSCTTPTYG…RAPPPARLTL (76 aa). Positions 11 to 31 are enriched in low complexity; it reads VSTQLESQSSESPSRSSVMTP. Residues 135-205 are qua1 domain; involved in homodimerization; sequence PTATEPIEVE…PEPAGDMISI (71 aa). The KH domain maps to 208-260; the sequence is KIYVPKNEYPDYNFVGRILGPRGMTAKQLEQDTGCKIMVRGKGSMRDKSKESA. Positions 305-336 are qua2 domain; involved in RNA binding; it reads APEGTDELKRKQLMELAIINGTYRPMKSPNPA. The disordered stretch occupies residues 443 to 463; that stretch reads NTNVSPSGASPSASSVNNTSF. Over residues 447-457 the composition is skewed to low complexity; it reads SPSGASPSASS.

Homodimer. In terms of processing, phosphorylated by cdk-2 which may negatively regulate its expression in distal mitotic germline cells. Post-translationally, undergoes proteasomal degradation in proximal oocytes following mating. Expressed in proximal and distal oocytes in female worms but is eliminated from proximal oocytes following mating.

RNA-binding protein which recognizes the 5'-UACUCAU-3' RNA consensus sequence. Binds sequences in both the 5'coding and the 3'-UTR region of rme-2 mRNA. Binds sequences in the 3'-UTR region of cye-1 mRNA. Binds to cyb-2.1, cyb-2.2 and cyb-3 mRNA. Binds sequences in the 3'-UTR region of tra-2 mRNA. Binds to the 3' UTR of Notch receptor homolog glp-1, thereby repressing glp-1 translation in the embryo. Binding to the glp-1 3' UTR is inhibited by pos-1 binding to an overlapping binding site in the glp-1 3' UTR. Germ line-specific tumor suppressor essential for oogenesis. Controls the spatial pattern of translation of multiple oogenesis specific mRNAs (e.g. yolk receptor rme-2) by repression of translation during early meiotic prophase (leptotene to pachytene) and then derepression of translation during diplotene/ diakinesis, following its degradation. Also functions to promote the male sexual fate in the hermaphrodite germline but not the male germline. Represses translation of the vacuolar ATPase component vha-13 in the distal gonad. Functions redundantly with gld-2 to promote the initiation of meiotic development and/or inhibit stem cell proliferation. By regulating cye-1 expression, prevents entry into mitosis in meiotic germline cells. In Caenorhabditis elegans, this protein is Female germline-specific tumor suppressor gld-1 (gld-1).